We begin with the raw amino-acid sequence, 281 residues long: Putative phosphatase/phosphodiesterase MG246 (281 aa).

4 residues coordinate Fe cation: aspartate 11, glutamate 42, asparagine 43, and asparagine 70. The active-site Proton donor is the histidine 71. The Fe cation site is built by histidine 157, histidine 182, and histidine 184.

This sequence belongs to the YmdB-like family. Fe(3+) is required as a cofactor.

This chain is Putative phosphatase/phosphodiesterase MG246, found in Mycoplasma genitalium (strain ATCC 33530 / DSM 19775 / NCTC 10195 / G37) (Mycoplasmoides genitalium).